The sequence spans 311 residues: DNA repair and recombination protein RadA (311 aa).

Gly104–Ser111 serves as a coordination point for ATP.

The protein belongs to the eukaryotic RecA-like protein family.

Functionally, involved in DNA repair and in homologous recombination. Binds and assemble on single-stranded DNA to form a nucleoprotein filament. Hydrolyzes ATP in a ssDNA-dependent manner and promotes DNA strand exchange between homologous DNA molecules. This is DNA repair and recombination protein RadA from Methanobrevibacter smithii (strain ATCC 35061 / DSM 861 / OCM 144 / PS).